The sequence spans 529 residues: Bifunctional purine biosynthesis protein PurH (529 aa).

The 148-residue stretch at 2–149 folds into the MGS-like domain; sequence TNLVPVGRAL…KNHRFVNVVT (148 aa).

This sequence belongs to the PurH family.

It catalyses the reaction (6R)-10-formyltetrahydrofolate + 5-amino-1-(5-phospho-beta-D-ribosyl)imidazole-4-carboxamide = 5-formamido-1-(5-phospho-D-ribosyl)imidazole-4-carboxamide + (6S)-5,6,7,8-tetrahydrofolate. The enzyme catalyses IMP + H2O = 5-formamido-1-(5-phospho-D-ribosyl)imidazole-4-carboxamide. It participates in purine metabolism; IMP biosynthesis via de novo pathway; 5-formamido-1-(5-phospho-D-ribosyl)imidazole-4-carboxamide from 5-amino-1-(5-phospho-D-ribosyl)imidazole-4-carboxamide (10-formyl THF route): step 1/1. The protein operates within purine metabolism; IMP biosynthesis via de novo pathway; IMP from 5-formamido-1-(5-phospho-D-ribosyl)imidazole-4-carboxamide: step 1/1. This is Bifunctional purine biosynthesis protein PurH from Cereibacter sphaeroides (strain ATCC 17029 / ATH 2.4.9) (Rhodobacter sphaeroides).